The primary structure comprises 186 residues: Peptidyl-tRNA hydrolase (186 aa).

Tyr-17 is a tRNA binding site. His-22 acts as the Proton acceptor in catalysis. TRNA contacts are provided by Tyr-64 and Asn-66.

This sequence belongs to the PTH family. Monomer.

The protein localises to the cytoplasm. The enzyme catalyses an N-acyl-L-alpha-aminoacyl-tRNA + H2O = an N-acyl-L-amino acid + a tRNA + H(+). Its function is as follows. Hydrolyzes ribosome-free peptidyl-tRNAs (with 1 or more amino acids incorporated), which drop off the ribosome during protein synthesis, or as a result of ribosome stalling. Catalyzes the release of premature peptidyl moieties from peptidyl-tRNA molecules trapped in stalled 50S ribosomal subunits, and thus maintains levels of free tRNAs and 50S ribosomes. In Methylacidiphilum infernorum (isolate V4) (Methylokorus infernorum (strain V4)), this protein is Peptidyl-tRNA hydrolase.